The chain runs to 552 residues: MMESAVTAHTLRIAMAQFDFPVGAVTQNTDRIIEYIAAARDEFEADIVLFPELAISGYPPEDLLLRPGFLAHCEQALARIAAATRGIVAVVGWPQSAGSVVYNAASVLREGRIEATYRKRELPNYAVFDERRYFDVDPDGDNCVVTVKGVQVGVVICEDLWFAEPLAKTVQAGAELVLVPNASPYERGKHAQRDALLAERTRESGAAIAYLNVVGGQDALVFDGASVVADGDGTVHPAAAAFVDQWLVVDYAAGERSFTPVVWVDDGDESMDALAWRAVVRGLKDYCGKNGFRKVWLGLSGGIDSALVLAMAVDALGGENVTAVRLPSRYTAGLSNDLADEQCRALGVKLETIAIEPAFEGLLAALGPLFADTQPDITEENLQSRSRGVILMALSNKFGGLVLTTGNKSEYAVGYATIYGDMCGGYAPLKDLYKTEVFGLAKWRNTVGGAPVIPPAVISRPPSAELRDNQTDQDSLPPYDVLDGILYRYVDQEQSRDDIVAAGYAADTVEHVLRLVRLNEWKRHQAAPGPKVSRRAFGRERRYPITNGYSGQ.

The region spanning 11-253 (LRIAMAQFDF…DQWLVVDYAA (243 aa)) is the CN hydrolase domain. The active-site Proton acceptor; for glutaminase activity is Glu-52. The For glutaminase activity role is filled by Lys-119. Tyr-125 lines the L-glutamine pocket. Residue Cys-157 is the Nucleophile; for glutaminase activity of the active site. The L-glutamine site is built by Ser-183 and Lys-189. The segment at 275–552 (AWRAVVRGLK…YPITNGYSGQ (278 aa)) is ligase. Residue 298–305 (GLSGGIDS) coordinates ATP. Residue Asn-381 participates in deamido-NAD(+) binding. Thr-405 serves as a coordination point for ATP. Residues Glu-410 and Lys-522 each coordinate deamido-NAD(+).

The protein in the C-terminal section; belongs to the NAD synthetase family.

It catalyses the reaction deamido-NAD(+) + L-glutamine + ATP + H2O = L-glutamate + AMP + diphosphate + NAD(+) + H(+). It functions in the pathway cofactor biosynthesis; NAD(+) biosynthesis; NAD(+) from deamido-NAD(+) (L-Gln route): step 1/1. Catalyzes the ATP-dependent amidation of deamido-NAD to form NAD. Uses L-glutamine as a nitrogen source. The sequence is that of Glutamine-dependent NAD(+) synthetase from Xanthomonas campestris pv. campestris (strain 8004).